Here is a 609-residue protein sequence, read N- to C-terminus: Heat shock factor protein (609 aa).

Positions 1-33 (MIQTASTISSNGGTNQGMESSSANSPEMNGTQN) are enriched in polar residues. The segment at 1–47 (MIQTASTISSNGGTNQGMESSSANSPEMNGTQNSMSVGMSGSGSSQN) is disordered. The span at 34 to 45 (SMSVGMSGSGSS) shows a compositional bias: low complexity. A DNA-binding region spans residues 50–156 (ITQFSNKLYN…LLCLVTRKKA (107 aa)). 4 disordered regions span residues 255–298 (PTVS…GKYR), 310–371 (SSFN…TDPK), 411–445 (NNTS…QPVQ), and 567–609 (SNGN…SIGA). Polar residues-rich tracts occupy residues 257–277 (VSPT…TTAN), 339–360 (DSFN…TDVP), 422–443 (YRGS…NLQP), and 567–597 (SNGN…SSPR). Serine 350 carries the post-translational modification Phosphoserine. Over residues 598-609 (QVRKKRKSSIGA) the composition is skewed to basic residues.

Belongs to the HSF family. Homotrimer.

It is found in the nucleus. In terms of biological role, DNA-binding protein that specifically binds heat shock promoter elements (HSE) and activates transcription. Also required for growth at normal temperatures. The polypeptide is Heat shock factor protein (hsf1) (Schizosaccharomyces pombe (strain 972 / ATCC 24843) (Fission yeast)).